The primary structure comprises 170 residues: Adenine phosphoribosyltransferase (170 aa).

The protein belongs to the purine/pyrimidine phosphoribosyltransferase family. In terms of assembly, homodimer.

It is found in the cytoplasm. The catalysed reaction is AMP + diphosphate = 5-phospho-alpha-D-ribose 1-diphosphate + adenine. It participates in purine metabolism; AMP biosynthesis via salvage pathway; AMP from adenine: step 1/1. Catalyzes a salvage reaction resulting in the formation of AMP, that is energically less costly than de novo synthesis. In Alkaliphilus metalliredigens (strain QYMF), this protein is Adenine phosphoribosyltransferase.